The primary structure comprises 96 residues: Small ribosomal subunit protein bS6 (96 aa).

It belongs to the bacterial ribosomal protein bS6 family.

Its function is as follows. Binds together with bS18 to 16S ribosomal RNA. The sequence is that of Small ribosomal subunit protein bS6 from Nocardioides sp. (strain ATCC BAA-499 / JS614).